Reading from the N-terminus, the 524-residue chain is Alkaline phosphatase, tissue-nonspecific isozyme (524 aa).

The signal sequence occupies residues 1-17 (MISPFLVLAIGTCLTNS). D60 lines the Mg(2+) pocket. Zn(2+)-binding residues include D60 and S110. Catalysis depends on S110, which acts as the Phosphoserine intermediate. The residue at position 110 (S110) is a Phosphoserine. C139 and C201 are joined by a disulfide. A glycan (N-linked (GlcNAc...) asparagine) is linked at N140. T173 is a binding site for Mg(2+). N230 carries N-linked (GlcNAc...) asparagine glycosylation. E235 is a binding site for Ca(2+). N-linked (GlcNAc...) asparagine glycosylation is present at N271. F290 and E291 together coordinate Ca(2+). An N-linked (GlcNAc...) asparagine glycan is attached at N302. D306 is a binding site for Ca(2+). Residue E332 participates in Mg(2+) binding. 4 residues coordinate Zn(2+): D337, H341, D378, and H379. N430 is a glycosylation site (N-linked (GlcNAc...) asparagine). H454 contributes to the Zn(2+) binding site. A disulfide bridge connects residues C489 and C497. The GPI-anchor amidated serine moiety is linked to residue S499. A propeptide spans 500–524 (ASSAGGPSPGPLFLLLALPSLGILF) (removed in mature form).

The protein belongs to the alkaline phosphatase family. Homodimer. Mg(2+) is required as a cofactor. Requires Zn(2+) as cofactor. It depends on Ca(2+) as a cofactor. N-glycosylated.

The protein resides in the cell membrane. Its subcellular location is the extracellular vesicle membrane. It localises to the mitochondrion membrane. It is found in the mitochondrion intermembrane space. It catalyses the reaction a phosphate monoester + H2O = an alcohol + phosphate. The catalysed reaction is diphosphate + H2O = 2 phosphate + H(+). It carries out the reaction pyridoxal 5'-phosphate + H2O = pyridoxal + phosphate. The enzyme catalyses phosphoethanolamine + H2O = ethanolamine + phosphate. It catalyses the reaction N-phosphocreatine + H2O = creatine + phosphate. The catalysed reaction is ATP + H2O = ADP + phosphate + H(+). It carries out the reaction ADP + H2O = AMP + phosphate + H(+). The enzyme catalyses AMP + H2O = adenosine + phosphate. Its activity is regulated as follows. Phosphatase activity is specifically inhibited by 5-((5-chloro-2-methoxyphenyl)sulfonamido)nicotinamide (SBI-425). Alkaline phosphatase that metabolizes various phosphate compounds and plays a key role in skeletal mineralization and adaptive thermogenesis. Has broad substrate specificity and can hydrolyze a considerable variety of compounds: however, only a few substrates, such as diphosphate (inorganic pyrophosphate; PPi), pyridoxal 5'-phosphate (PLP) and N-phosphocreatine are natural substrates. Plays an essential role in skeletal and dental mineralization via its ability to hydrolyze extracellular diphosphate, a potent mineralization inhibitor, to phosphate: it thereby promotes hydroxyapatite crystal formation and increases inorganic phosphate concentration. Acts in a non-redundant manner with PHOSPHO1 in skeletal mineralization: while PHOSPHO1 mediates the initiation of hydroxyapatite crystallization in the matrix vesicles (MVs), ALPL/TNAP catalyzes the spread of hydroxyapatite crystallization in the extracellular matrix. Also promotes dephosphorylation of osteopontin (SSP1), an inhibitor of hydroxyapatite crystallization in its phosphorylated state; it is however unclear whether ALPL/TNAP mediates SSP1 dephosphorylation via a direct or indirect manner. Catalyzes dephosphorylation of PLP to pyridoxal (PL), the transportable form of vitamin B6, in order to provide a sufficient amount of PLP in the brain, an essential cofactor for enzymes catalyzing the synthesis of diverse neurotransmitters. Additionally, also able to mediate ATP degradation in a stepwise manner to adenosine, thereby regulating the availability of ligands for purinergic receptors. Also capable of dephosphorylating microbial products, such as lipopolysaccharides (LPS) as well as other phosphorylated small-molecules, such as poly-inosine:cytosine (poly I:C). Acts as a key regulator of adaptive thermogenesis as part of the futile creatine cycle: localizes to the mitochondria of thermogenic fat cells and acts by mediating hydrolysis of N-phosphocreatine to initiate a futile cycle of creatine dephosphorylation and phosphorylation. During the futile creatine cycle, creatine and N-phosphocreatine are in a futile cycle, which dissipates the high energy charge of N-phosphocreatine as heat without performing any mechanical or chemical work. The polypeptide is Alkaline phosphatase, tissue-nonspecific isozyme (ALPL) (Felis catus (Cat)).